We begin with the raw amino-acid sequence, 291 residues long: Homoserine kinase (291 aa).

Position 80-90 (80-90 (RPSSGLGSSAA)) interacts with ATP.

The protein belongs to the GHMP kinase family. Homoserine kinase subfamily.

Its subcellular location is the cytoplasm. The enzyme catalyses L-homoserine + ATP = O-phospho-L-homoserine + ADP + H(+). Its pathway is amino-acid biosynthesis; L-threonine biosynthesis; L-threonine from L-aspartate: step 4/5. Its function is as follows. Catalyzes the ATP-dependent phosphorylation of L-homoserine to L-homoserine phosphate. This chain is Homoserine kinase, found in Haloquadratum walsbyi (strain DSM 16790 / HBSQ001).